We begin with the raw amino-acid sequence, 340 residues long: Immunoglobulin-binding protein 1 (340 aa).

The 15-residue stretch at 47–61 (LELLEKAAGMLSQLD) folds into the UIM domain. Residues 99–203 (RLDHLQRARE…YLLHLRRWIG (105 aa)) are interaction with PPP2CA. 2 disordered regions span residues 221-242 (DKDS…PPMK) and 281-340 (LPDR…QNMG). The interval 226–291 (REESACQSSL…PDRGIAKPPS (66 aa)) is interaction with MID1. K242 is modified (N6-acetyllysine). Residues 292–301 (ADFQRAAQQQ) show a composition bias toward low complexity. Residues 302 to 312 (EDQEQKDEENE) show a composition bias toward acidic residues. Over residues 313–330 (EKALHRMREWDDWKDTHP) the composition is skewed to basic and acidic residues.

This sequence belongs to the IGBP1/TAP42 family. In terms of assembly, interacts with partially folded PPP2CA, but not with the fully active protein. Interacts with PPP2CB, and with PP4 and PP6. Interacts with MID1 and MID2. Interacts with ubiquitin. Phosphorylated. In terms of processing, monoubiquitination by MID1 triggers calpain-mediated cleavage and switches IGBP1 activity from protective to destructive.

It localises to the cytoplasm. In terms of biological role, associated to surface IgM-receptor; may be involved in signal transduction. Involved in regulation of the catalytic activity of the phosphatases PP2A, PP4 and PP6 by protecting their partially folded catalytic subunits from degradative polyubiquitination until they associate with regulatory subunits. This chain is Immunoglobulin-binding protein 1 (Igbp1), found in Rattus norvegicus (Rat).